The following is a 545-amino-acid chain: Chaperonin GroEL (545 aa).

ATP-binding positions include threonine 29 to proline 32, aspartate 86 to threonine 90, glycine 413, asparagine 476 to alanine 478, and aspartate 492.

It belongs to the chaperonin (HSP60) family. As to quaternary structure, forms a cylinder of 14 subunits composed of two heptameric rings stacked back-to-back. Interacts with the co-chaperonin GroES.

The protein resides in the cytoplasm. The catalysed reaction is ATP + H2O + a folded polypeptide = ADP + phosphate + an unfolded polypeptide.. Functionally, together with its co-chaperonin GroES, plays an essential role in assisting protein folding. The GroEL-GroES system forms a nano-cage that allows encapsulation of the non-native substrate proteins and provides a physical environment optimized to promote and accelerate protein folding. This Shouchella clausii (strain KSM-K16) (Alkalihalobacillus clausii) protein is Chaperonin GroEL.